A 130-amino-acid polypeptide reads, in one-letter code: ATP synthase epsilon chain (130 aa).

The protein belongs to the ATPase epsilon chain family. As to quaternary structure, F-type ATPases have 2 components, CF(1) - the catalytic core - and CF(0) - the membrane proton channel. CF(1) has five subunits: alpha(3), beta(3), gamma(1), delta(1), epsilon(1). CF(0) has three main subunits: a, b and c.

Its subcellular location is the cell inner membrane. Its function is as follows. Produces ATP from ADP in the presence of a proton gradient across the membrane. This is ATP synthase epsilon chain from Campylobacter lari (strain RM2100 / D67 / ATCC BAA-1060).